We begin with the raw amino-acid sequence, 89 residues long: MKHIVKILSLLVAISAFWIGLLQAAIIPRSHTWLLPIYFVVSLGCYGLLMVGVGLMQFPTCPQEAVLLQKDIAEAKDFFKHKGVDVGSN.

The next 2 membrane-spanning stretches (helical) occupy residues 7-27 (ILSL…AAII) and 33-53 (WLLP…MVGV).

The protein belongs to the DPM3 family. Component of the dolichol-phosphate mannose (DPM) synthase complex composed of DPMS1, DPMS2 and DPMS3; in the complex interacts directly with DPMS1 and DPMS2.

The protein resides in the endoplasmic reticulum membrane. The protein operates within protein modification; protein glycosylation. Functionally, regulates the biosynthesis of dolichol phosphate-mannose. Regulatory subunit of the dolichol-phosphate mannose (DPM) synthase complex; essential for the ER localization and stable expression of DPMS1. The protein is Dolichol-phosphate mannose synthase subunit 3 of Arabidopsis thaliana (Mouse-ear cress).